Reading from the N-terminus, the 333-residue chain is Glycerol-3-phosphate dehydrogenase [NAD(P)+] (333 aa).

Residues S10, W11, H31, R32, and K105 each contribute to the NADPH site. Sn-glycerol 3-phosphate is bound by residues K105, G136, and S138. Residue A140 participates in NADPH binding. Positions 191, 244, 254, 255, and 256 each coordinate sn-glycerol 3-phosphate. K191 functions as the Proton acceptor in the catalytic mechanism. R255 contacts NADPH. 2 residues coordinate NADPH: V279 and E281.

This sequence belongs to the NAD-dependent glycerol-3-phosphate dehydrogenase family.

Its subcellular location is the cytoplasm. The enzyme catalyses sn-glycerol 3-phosphate + NAD(+) = dihydroxyacetone phosphate + NADH + H(+). It carries out the reaction sn-glycerol 3-phosphate + NADP(+) = dihydroxyacetone phosphate + NADPH + H(+). It functions in the pathway membrane lipid metabolism; glycerophospholipid metabolism. Its function is as follows. Catalyzes the reduction of the glycolytic intermediate dihydroxyacetone phosphate (DHAP) to sn-glycerol 3-phosphate (G3P), the key precursor for phospholipid synthesis. This chain is Glycerol-3-phosphate dehydrogenase [NAD(P)+], found in Chlorobium limicola (strain DSM 245 / NBRC 103803 / 6330).